A 95-amino-acid polypeptide reads, in one-letter code: MAFTIQPRQSLIVYTYSLKQTRQLKRYGTVMYVSKKMRYVVLYVNREDVTKLTDQLTHLRFVKRVVASSRPTINETFNGVAAEMVTTTETEDDDE.

The protein belongs to the UPF0298 family.

The protein localises to the cytoplasm. This Levilactobacillus brevis (strain ATCC 367 / BCRC 12310 / CIP 105137 / JCM 1170 / LMG 11437 / NCIMB 947 / NCTC 947) (Lactobacillus brevis) protein is UPF0298 protein LVIS_1401.